Here is a 416-residue protein sequence, read N- to C-terminus: Serine hydroxymethyltransferase (416 aa).

(6S)-5,6,7,8-tetrahydrofolate contacts are provided by residues Leu121 and 125-127; that span reads GHL. An N6-(pyridoxal phosphate)lysine modification is found at Lys229. 354-356 is a (6S)-5,6,7,8-tetrahydrofolate binding site; that stretch reads SPF.

This sequence belongs to the SHMT family. As to quaternary structure, homodimer. It depends on pyridoxal 5'-phosphate as a cofactor.

Its subcellular location is the cytoplasm. It catalyses the reaction (6R)-5,10-methylene-5,6,7,8-tetrahydrofolate + glycine + H2O = (6S)-5,6,7,8-tetrahydrofolate + L-serine. The protein operates within one-carbon metabolism; tetrahydrofolate interconversion. It functions in the pathway amino-acid biosynthesis; glycine biosynthesis; glycine from L-serine: step 1/1. Its function is as follows. Catalyzes the reversible interconversion of serine and glycine with tetrahydrofolate (THF) serving as the one-carbon carrier. This reaction serves as the major source of one-carbon groups required for the biosynthesis of purines, thymidylate, methionine, and other important biomolecules. Also exhibits THF-independent aldolase activity toward beta-hydroxyamino acids, producing glycine and aldehydes, via a retro-aldol mechanism. The chain is Serine hydroxymethyltransferase from Halorhodospira halophila (strain DSM 244 / SL1) (Ectothiorhodospira halophila (strain DSM 244 / SL1)).